A 387-amino-acid chain; its full sequence is Transcription termination/antitermination protein NusA (387 aa).

The region spanning 145–209 (GQVLTGVVTR…AKGPSLLVSR (65 aa)) is the S1 motif domain. A KH domain is found at 312–379 (AKKARVKVTK…ARERKAREEF (68 aa)).

This sequence belongs to the NusA family. Monomer. Binds directly to the core enzyme of the DNA-dependent RNA polymerase and to nascent RNA.

It localises to the cytoplasm. Its function is as follows. Participates in both transcription termination and antitermination. This chain is Transcription termination/antitermination protein NusA, found in Thermus thermophilus (strain ATCC 27634 / DSM 579 / HB8).